The sequence spans 169 residues: Protein-export protein SecB (169 aa).

It belongs to the SecB family. In terms of assembly, homotetramer, a dimer of dimers. One homotetramer interacts with 1 SecA dimer.

Its subcellular location is the cytoplasm. One of the proteins required for the normal export of preproteins out of the cell cytoplasm. It is a molecular chaperone that binds to a subset of precursor proteins, maintaining them in a translocation-competent state. It also specifically binds to its receptor SecA. The sequence is that of Protein-export protein SecB from Haemophilus influenzae (strain PittEE).